The sequence spans 962 residues: Synphilin-1 (962 aa).

Disordered stretches follow at residues 80–99 (SPLK…DQKN), 104–137 (YQKG…EPSQ), and 222–249 (TALR…PAYE). ANK repeat units lie at residues 348 to 379 (NGNN…CLNE), 383 to 412 (EQLT…AIAE), 418 to 447 (DFPS…EQGI), and 455 to 484 (EGNS…NVTM). Positions 522 to 548 (VKLTKQLKEQTVERVTLQSQLQQLLEA) form a coiled coil. A disordered region spans residues 548-590 (AQKSEGKSLPSSPSSPSSPASTKSQWKALDTDEESTGKSKVGA). The span at 554-571 (KSLPSSPSSPSSPASTKS) shows a compositional bias: low complexity. The ANK 5 repeat unit spans residues 602 to 631 (VSSRARTKGKDEDSDKILRQLLGKEISENV). Residues 667–684 (RQLMQRSLSESDTDSNNS) show a composition bias toward low complexity. A disordered region spans residues 667-852 (RQLMQRSLSE…QRTSESGEQM (186 aa)). A compositionally biased stretch (basic and acidic residues) spans 685 to 699 (EDPKNTPVKRADRPR). Residues 698-728 (PRPQPIVESVENVDSAESLHLMIKKHSLASG) form an ANK 6 repeat. Over residues 772 to 790 (PSTEATQSSPDSTAAQKVA) the composition is skewed to polar residues. A compositionally biased stretch (basic and acidic residues) spans 831–840 (NGEKDKDKGR).

Associates with SNCA, RNF19A and PRKN. Post-translationally, ubiquitinated; mediated by SIAH1 or RNF19A and leading to its subsequent proteasomal degradation.

The polypeptide is Synphilin-1 (Sncaip) (Mus musculus (Mouse)).